Here is a 344-residue protein sequence, read N- to C-terminus: MENEEIPEFLSPKEEIVYWRELAKRLKQSYQEARDELIEFQEGSRELEAELETQLIQAEQRNRDLLGDNQRLKCEVDSLKEKLEHQYAQSYKQVSLLEDELVRARSIKDQLHKYVRELEQANDDLERAKRATIVSLEDFEQRLNQAIERNAFLESELDEKESLLVSVQRLKDEARDLRQELAVRERQTDGIRKSAPSSPTLDCEKTDSSVQASLSLPATPVGKISENSFTSPKGIPNGFGTTPLTPSARISALNIVGDLLRKVGALESKLAACRNFAKDQASRKSYTPANLNSSSSSVLNSSGVKYSHAGHTSFFDKGAVNGYDPPGVLGSRPPSPPGLLPLSV.

Residues 13-190 adopt a coiled-coil conformation; sequence KEEIVYWREL…LAVRERQTDG (178 aa). Disordered stretches follow at residues 186–209 and 325–344; these read RQTD…TDSS and PPGV…PLSV. Pro residues predominate over residues 333 to 344; sequence PPSPPGLLPLSV.

It belongs to the nudE family. Phosphorylated in mitosis.

Its subcellular location is the cytoplasm. It localises to the cytoskeleton. The protein resides in the microtubule organizing center. The protein localises to the centrosome. It is found in the spindle. Functionally, required for organization of the cellular microtubule array and microtubule anchoring at the centrosome. Positively regulates the activity of the minus-end directed microtubule motor protein dynein. May enhance dynein-mediated microtubule sliding by targeting dynein to the microtubule plus end. Positively regulates lysosome peripheral distribution and ruffled border formation in osteoclasts. The protein is Nuclear distribution protein nudE-like 1-B (ndel1-b) of Xenopus laevis (African clawed frog).